Consider the following 329-residue polypeptide: Flotillin-like protein FloA (329 aa).

Residues 4-24 (IWGFLILILVLIFLGVFFSFV) form a helical membrane-spanning segment.

This sequence belongs to the flotillin-like FloA family. As to quaternary structure, homooligomerizes.

The protein localises to the cell membrane. It is found in the membrane raft. Found in functional membrane microdomains (FMM) that may be equivalent to eukaryotic membrane rafts. FMMs are highly dynamic and increase in number as cells age. Flotillins are thought to be important factors in membrane fluidity. This Dictyoglomus turgidum (strain DSM 6724 / Z-1310) protein is Flotillin-like protein FloA.